Here is a 320-residue protein sequence, read N- to C-terminus: MPLRKKGAATTKAAATRKDSAKAPASSKRKDAPQHKPELVIITGLSGSGKGSVLKALEDLGFYSVDNLPVELIPKFAELTCNNPSIPAAALVVDIREGSGLKSFPKVFAKIRKSVTARLIFLEADNDAIVRRFSETRRPHPLGTGKSITRSIQSERTQLAPIRAMADLTINTSKFTVHELRDFIGERFRGRRDQSDIMIYVASFGYRNGVPPDSDLVFDVRFLPNPNYIPRFKNLTGRNPDVAGYIRSFPQTVEFINRISDLLVYLLPHYIREGKSYLTISFGCTGGQHRSVMIADEIKRNLSSAGYTAKVNHRDIVKAR.

The tract at residues 1 to 34 is disordered; sequence MPLRKKGAATTKAAATRKDSAKAPASSKRKDAPQ. 44-51 serves as a coordination point for ATP; that stretch reads GLSGSGKG. 94–97 serves as a coordination point for GTP; the sequence is DIRE.

This sequence belongs to the RapZ-like family.

Functionally, displays ATPase and GTPase activities. This Solibacter usitatus (strain Ellin6076) protein is Nucleotide-binding protein Acid_7395.